Here is an 83-residue protein sequence, read N- to C-terminus: uncharacterized protein (83 aa).

This is an uncharacterized protein from Synechocystis sp. (strain ATCC 27184 / PCC 6803 / Kazusa).